A 241-amino-acid chain; its full sequence is Pyridoxine 5'-phosphate synthase (241 aa).

Position 7 (Asn-7) interacts with 3-amino-2-oxopropyl phosphate. Position 9–10 (9–10 (DH)) interacts with 1-deoxy-D-xylulose 5-phosphate. Arg-18 serves as a coordination point for 3-amino-2-oxopropyl phosphate. Catalysis depends on His-43, which acts as the Proton acceptor. 1-deoxy-D-xylulose 5-phosphate is bound by residues Arg-45 and His-50. Glu-70 functions as the Proton acceptor in the catalytic mechanism. Thr-100 contributes to the 1-deoxy-D-xylulose 5-phosphate binding site. Residue His-191 is the Proton donor of the active site. Residues Gly-192 and 213 to 214 (GH) each bind 3-amino-2-oxopropyl phosphate.

This sequence belongs to the PNP synthase family. Homooctamer; tetramer of dimers.

It is found in the cytoplasm. It catalyses the reaction 3-amino-2-oxopropyl phosphate + 1-deoxy-D-xylulose 5-phosphate = pyridoxine 5'-phosphate + phosphate + 2 H2O + H(+). Its pathway is cofactor biosynthesis; pyridoxine 5'-phosphate biosynthesis; pyridoxine 5'-phosphate from D-erythrose 4-phosphate: step 5/5. Its function is as follows. Catalyzes the complicated ring closure reaction between the two acyclic compounds 1-deoxy-D-xylulose-5-phosphate (DXP) and 3-amino-2-oxopropyl phosphate (1-amino-acetone-3-phosphate or AAP) to form pyridoxine 5'-phosphate (PNP) and inorganic phosphate. The polypeptide is Pyridoxine 5'-phosphate synthase (Nitrosospira multiformis (strain ATCC 25196 / NCIMB 11849 / C 71)).